We begin with the raw amino-acid sequence, 278 residues long: Orotidine 5'-phosphate decarboxylase (278 aa).

Lysine 96 (proton donor) is an active-site residue.

It belongs to the OMP decarboxylase family. Type 2 subfamily.

The catalysed reaction is orotidine 5'-phosphate + H(+) = UMP + CO2. The protein operates within pyrimidine metabolism; UMP biosynthesis via de novo pathway; UMP from orotate: step 2/2. The protein is Orotidine 5'-phosphate decarboxylase of Salinispora tropica (strain ATCC BAA-916 / DSM 44818 / JCM 13857 / NBRC 105044 / CNB-440).